We begin with the raw amino-acid sequence, 322 residues long: tRNA U34 carboxymethyltransferase (322 aa).

Residues Lys-91, Trp-105, Lys-110, Gly-129, Met-195, Tyr-199, and Arg-314 each coordinate carboxy-S-adenosyl-L-methionine.

It belongs to the class I-like SAM-binding methyltransferase superfamily. CmoB family. Homotetramer.

It carries out the reaction carboxy-S-adenosyl-L-methionine + 5-hydroxyuridine(34) in tRNA = 5-carboxymethoxyuridine(34) in tRNA + S-adenosyl-L-homocysteine + H(+). Its function is as follows. Catalyzes carboxymethyl transfer from carboxy-S-adenosyl-L-methionine (Cx-SAM) to 5-hydroxyuridine (ho5U) to form 5-carboxymethoxyuridine (cmo5U) at position 34 in tRNAs. The sequence is that of tRNA U34 carboxymethyltransferase from Ectopseudomonas mendocina (strain ymp) (Pseudomonas mendocina).